Consider the following 394-residue polypeptide: Metallophosphoesterase 1 (394 aa).

A helical transmembrane segment spans residues 27-47 (TVVVISVLLFCEYFIYYLVLF). A divalent metal cation is bound by residues aspartate 74, aspartate 116, asparagine 154, histidine 247, histidine 301, and histidine 303. The helical transmembrane segment at 354–374 (TVLTTYCAAAAFLLVLILAHF) threads the bilayer.

The protein belongs to the metallophosphoesterase superfamily. MPPE1 family. Interacts with GPI-anchor proteins (via the GPI portion). Interacts with TMED10. It depends on Mn(2+) as a cofactor.

It localises to the endoplasmic reticulum-Golgi intermediate compartment membrane. In terms of biological role, metallophosphoesterase that catalyzes the removal of a side-chain ethanolamine-phosphate (EtNP) from the second mannose of the GPI-anchor protein intermediate. Participates in the glycan remodeling steps of GPI-anchor maturation to allow an efficient transport of GPI-anchor proteins from the endoplasmic reticulum to the Golgi. The sequence is that of Metallophosphoesterase 1 from Rattus norvegicus (Rat).